The following is a 51-amino-acid chain: Large ribosomal subunit protein eL39 (51 aa).

Belongs to the eukaryotic ribosomal protein eL39 family.

The sequence is that of Large ribosomal subunit protein eL39 (rpl39e) from Pyrococcus abyssi (strain GE5 / Orsay).